The following is a 271-amino-acid chain: Protein PXR1 (271 aa).

Disordered stretches follow at residues 1–26 (MGLAAARNKQRFGLDPRNTTWSNNTS) and 149–233 (KKRP…DSAA). Positions 17-26 (RNTTWSNNTS) are enriched in polar residues. Residues 25–71 (TSRFGHKHLEKLGWKPGSGLGLVPDSTTSHIKVSIKDDNLGLGAKLK) form the G-patch domain. Residues 165–205 (KKTKKVKKEKKVKKVKKEKKEKKEKKDKKEKKVKKEKKEKK) are compositionally biased toward basic residues. Positions 206–230 (EKKLKDKHSKDTNEITRDQMLKPRD) are enriched in basic and acidic residues.

The protein belongs to the PINX1 family.

It localises to the nucleus. The protein localises to the nucleolus. Involved in rRNA-processing at A0, A1 and A2 sites and negatively regulates telomerase. This is Protein PXR1 (PXR1) from Kluyveromyces lactis (strain ATCC 8585 / CBS 2359 / DSM 70799 / NBRC 1267 / NRRL Y-1140 / WM37) (Yeast).